The sequence spans 267 residues: 3-oxoadipate enol-lactonase 2 (267 aa).

The catalysed reaction is (4,5-dihydro-5-oxofuran-2-yl)-acetate + H2O = 3-oxoadipate + H(+). The protein operates within aromatic compound metabolism; beta-ketoadipate pathway; 3-oxoadipate from 5-oxo-4,5-dihydro-2-furylacetate: step 1/1. This is 3-oxoadipate enol-lactonase 2 (catD) from Acinetobacter baylyi (strain ATCC 33305 / BD413 / ADP1).